The following is an 869-amino-acid chain: Bifunctional uridylyltransferase/uridylyl-removing enzyme (869 aa).

The segment at 1–332 (MTATPADRPD…QFDGEAVPVQ (332 aa)) is uridylyltransferase. Residues 333–691 (LDAGFSLRRG…RRAVPDNDAL (359 aa)) form a uridylyl-removing region. The region spanning 450 to 572 (VDQHTLMVLR…VGTRERLDYL (123 aa)) is the HD domain. 2 ACT domains span residues 692–771 (EVFV…PSRR) and 798–869 (RISL…LDPT).

The protein belongs to the GlnD family. Mg(2+) is required as a cofactor.

It catalyses the reaction [protein-PII]-L-tyrosine + UTP = [protein-PII]-uridylyl-L-tyrosine + diphosphate. It carries out the reaction [protein-PII]-uridylyl-L-tyrosine + H2O = [protein-PII]-L-tyrosine + UMP + H(+). With respect to regulation, uridylyltransferase (UTase) activity is inhibited by glutamine, while glutamine activates uridylyl-removing (UR) activity. Functionally, modifies, by uridylylation and deuridylylation, the PII regulatory proteins (GlnB and homologs), in response to the nitrogen status of the cell that GlnD senses through the glutamine level. Under low glutamine levels, catalyzes the conversion of the PII proteins and UTP to PII-UMP and PPi, while under higher glutamine levels, GlnD hydrolyzes PII-UMP to PII and UMP (deuridylylation). Thus, controls uridylylation state and activity of the PII proteins, and plays an important role in the regulation of nitrogen assimilation and metabolism. The protein is Bifunctional uridylyltransferase/uridylyl-removing enzyme of Xanthomonas campestris pv. campestris (strain B100).